A 60-amino-acid polypeptide reads, in one-letter code: Large ribosomal subunit protein uL30 (60 aa).

It belongs to the universal ribosomal protein uL30 family. In terms of assembly, part of the 50S ribosomal subunit.

This Alcanivorax borkumensis (strain ATCC 700651 / DSM 11573 / NCIMB 13689 / SK2) protein is Large ribosomal subunit protein uL30.